The chain runs to 370 residues: Histidinol-phosphate aminotransferase (370 aa).

Lys230 carries the N6-(pyridoxal phosphate)lysine modification.

Belongs to the class-II pyridoxal-phosphate-dependent aminotransferase family. Histidinol-phosphate aminotransferase subfamily. As to quaternary structure, homodimer. Requires pyridoxal 5'-phosphate as cofactor.

It catalyses the reaction L-histidinol phosphate + 2-oxoglutarate = 3-(imidazol-4-yl)-2-oxopropyl phosphate + L-glutamate. The protein operates within amino-acid biosynthesis; L-histidine biosynthesis; L-histidine from 5-phospho-alpha-D-ribose 1-diphosphate: step 7/9. The chain is Histidinol-phosphate aminotransferase from Leptospira interrogans serogroup Icterohaemorrhagiae serovar Lai (strain 56601).